The sequence spans 419 residues: DNA polymerase IV (419 aa).

The 182-residue stretch at 12–193 (IFHIDMNCFY…MSVEEMYGIG (182 aa)) folds into the UmuC domain. Mg(2+)-binding residues include Asp16 and Asp112. The active site involves Glu113. A disordered region spans residues 388-419 (IITSQKNKNESQENQQPRTSFQKDFLDDYKKP).

Belongs to the DNA polymerase type-Y family. Monomer. Mg(2+) is required as a cofactor.

Its subcellular location is the cytoplasm. The enzyme catalyses DNA(n) + a 2'-deoxyribonucleoside 5'-triphosphate = DNA(n+1) + diphosphate. In terms of biological role, poorly processive, error-prone DNA polymerase involved in untargeted mutagenesis. Copies undamaged DNA at stalled replication forks, which arise in vivo from mismatched or misaligned primer ends. These misaligned primers can be extended by PolIV. Exhibits no 3'-5' exonuclease (proofreading) activity. May be involved in translesional synthesis, in conjunction with the beta clamp from PolIII. This is DNA polymerase IV from Oceanobacillus iheyensis (strain DSM 14371 / CIP 107618 / JCM 11309 / KCTC 3954 / HTE831).